The following is a 356-amino-acid chain: Nicotinate-nucleotide--dimethylbenzimidazole phosphoribosyltransferase (356 aa).

The active-site Proton acceptor is Glu317.

Belongs to the CobT family. In terms of assembly, homodimer.

The enzyme catalyses 5,6-dimethylbenzimidazole + nicotinate beta-D-ribonucleotide = alpha-ribazole 5'-phosphate + nicotinate + H(+). It participates in nucleoside biosynthesis; alpha-ribazole biosynthesis; alpha-ribazole from 5,6-dimethylbenzimidazole: step 1/2. Functionally, catalyzes the synthesis of alpha-ribazole-5'-phosphate from nicotinate mononucleotide (NAMN) and 5,6-dimethylbenzimidazole (DMB). The sequence is that of Nicotinate-nucleotide--dimethylbenzimidazole phosphoribosyltransferase from Salmonella paratyphi A (strain AKU_12601).